A 256-amino-acid polypeptide reads, in one-letter code: Biosynthetic peptidoglycan transglycosylase (256 aa).

A helical membrane pass occupies residues 26-48 (VARWLAYAGGVFAGAWLATQLYY).

Belongs to the glycosyltransferase 51 family.

Its subcellular location is the cell inner membrane. The catalysed reaction is [GlcNAc-(1-&gt;4)-Mur2Ac(oyl-L-Ala-gamma-D-Glu-L-Lys-D-Ala-D-Ala)](n)-di-trans,octa-cis-undecaprenyl diphosphate + beta-D-GlcNAc-(1-&gt;4)-Mur2Ac(oyl-L-Ala-gamma-D-Glu-L-Lys-D-Ala-D-Ala)-di-trans,octa-cis-undecaprenyl diphosphate = [GlcNAc-(1-&gt;4)-Mur2Ac(oyl-L-Ala-gamma-D-Glu-L-Lys-D-Ala-D-Ala)](n+1)-di-trans,octa-cis-undecaprenyl diphosphate + di-trans,octa-cis-undecaprenyl diphosphate + H(+). It participates in cell wall biogenesis; peptidoglycan biosynthesis. Its function is as follows. Peptidoglycan polymerase that catalyzes glycan chain elongation from lipid-linked precursors. This Burkholderia thailandensis (strain ATCC 700388 / DSM 13276 / CCUG 48851 / CIP 106301 / E264) protein is Biosynthetic peptidoglycan transglycosylase.